Here is a 1148-residue protein sequence, read N- to C-terminus: Envelopment polyprotein (1148 aa).

The signal sequence occupies residues 1–23 (MGELSPVCLCLLLQGLLLCNTGA). Topologically, residues 24 to 496 (ARNLNELKME…PGLHGWATML (473 aa)) are lumenal. Disulfide bonds link cysteine 34/cysteine 159, cysteine 68/cysteine 165, cysteine 117/cysteine 136, cysteine 141/cysteine 146, cysteine 183/cysteine 193, and cysteine 218/cysteine 257. Residue asparagine 142 is glycosylated (N-linked (GlcNAc...) asparagine; by host). A glycan (N-linked (GlcNAc...) asparagine; by host) is linked at asparagine 357. Intrachain disulfides connect cysteine 386–cysteine 445, cysteine 390–cysteine 399, cysteine 415–cysteine 434, and cysteine 462–cysteine 485. Asparagine 409 carries N-linked (GlcNAc...) asparagine; by host glycosylation. Residues 497 to 517 (LLLTFCFGWVLIPTITMILLK) traverse the membrane as a helical segment. The Cytoplasmic segment spans residues 518-637 (ILIAFAYLCS…LSLFRYRSRF (120 aa)). The interval 526 to 543 (CSKYNTDSKFRILIEKVK) is binding to the ribonucleoprotein. 2 consecutive CCHC-type zinc fingers follow at residues 555–575 (CEVCQYECETAKELESHRKSC) and 580–601 (CPYCLNPSEATTSALQAHFKVC). 3 binding to the ribonucleoprotein regions span residues 598 to 615 (FKVCKLTSRFQENLRKSL), 602 to 613 (KLTSRFQENLRK), and 621 to 635 (MQGCYRTLSLFRYRS). An ITAM domain is found at 621-644 (MQGCYRTLSLFRYRSRFFVGLVWC). Positions 625–628 (YRTL) match the YxxL motif. A helical transmembrane segment spans residues 638 to 658 (FVGLVWCVLLVLELIVWAASA). Residues 659-1115 (ETQNLNAGWT…WILGVLNGNW (457 aa)) lie on the Lumenal side of the membrane. 8 disulfide bridges follow: cysteine 745–cysteine 780, cysteine 749–cysteine 787, cysteine 761–cysteine 894, cysteine 775–cysteine 905, cysteine 790–cysteine 913, cysteine 816–cysteine 825, cysteine 833–cysteine 842, and cysteine 873–cysteine 877. Residues 767-787 (YEYETGWGCNPPDCPGVGTGC) are fusion loop. Asparagine 937 carries an N-linked (GlcNAc...) asparagine; by host glycan. 5 disulfide bridges follow: cysteine 979–cysteine 1009, cysteine 1002–cysteine 1054, cysteine 1019–cysteine 1024, cysteine 1055–cysteine 1060, and cysteine 1094–cysteine 1098. A helical transmembrane segment spans residues 1116–1136 (MVVAVLVVLLILSILLFTLCC). Binding to the ribonucleoprotein stretches follow at residues 1131–1143 (LFTLCCPRRPSYR) and 1131–1148 (LFTLCCPRRPSYRKEHKP). The Cytoplasmic portion of the chain corresponds to 1137 to 1148 (PRRPSYRKEHKP).

It belongs to the hantavirus envelope glycoprotein family. In terms of assembly, homodimer. Homotetramer; forms heterotetrameric Gn-Gc spikes in the pre-fusion conformation. Interacts (via C-terminus) with the nucleoprotein. Interacts with host TUFM; this interaction contributes to the virus-induced degradation of mitochondria by autophagy, which leads to degradation of host MAVS and inhibition of type I interferon (IFN) responses. Interacts with host MAP1LC3B; this interaction contributes to the virus-induced degradation of mitochondria by autophagy, which leads to degradation of host MAVS and inhibition of type I interferon (IFN) responses. As to quaternary structure, homodimer. Homotetramer; forms heterotetrameric Gn-Gc spikes in the pre-fusion conformation. Homotrimer; forms homotrimer in the post-fusion conformation at acidic pH. Interacts (via C-terminus) with the nucleoprotein. Post-translationally, envelope polyprotein precursor is quickly cleaved in vivo just after synthesis, presumably by host signal peptidase.

It is found in the virion membrane. Its subcellular location is the host cell surface. It localises to the host Golgi apparatus membrane. The protein localises to the host endoplasmic reticulum membrane. The protein resides in the host mitochondrion. Its function is as follows. Forms homotetramers with glycoprotein C at the surface of the virion. Attaches the virion to host cell receptors including integrin ITGAV/ITGB3. This attachment induces virion internalization predominantly through clathrin-dependent endocytosis. Mediates the assembly and budding of infectious virus particles through its interaction with the nucleocapsid protein and the viral genome. May dysregulate normal immune and endothelial cell responses through an ITAM motif. Translocates to mitochondria, binds to host TUFM and recruits MAP1LC3B. These interactions induce mitochondrial autophagy and therefore destruction of host MAVS leading to inhibition of type I interferon (IFN) responses. Concomitant breakdown of glycoprotein N is apparently prevented by the nucleoprotein that may inhibit Gn-stimulated autophagosome-lysosome fusion. Interacts with the viral genomic RNA. Functionally, forms homotetramers with glycoprotein N at the surface of the virion. Attaches the virion to host cell receptors including integrin ITGAV/ITGB3. This attachment induces virion internalization predominantly through clathrin-dependent endocytosis. Class II fusion protein that promotes fusion of viral membrane with host endosomal membrane after endocytosis of the virion. This is Envelopment polyprotein (GP) from Homo sapiens (Human).